The chain runs to 407 residues: FMN-dependent alpha-hydroxy acid dehydrogenase PB1A11.03 (407 aa).

One can recognise an FMN hydroxy acid dehydrogenase domain in the interval 28–406 (QRPQITVDGR…DLNRDVLYKE (379 aa)). An a 2-oxocarboxylate-binding site is contributed by tyrosine 54. The FMN site is built by serine 136 and glutamine 158. A 2-oxocarboxylate is bound at residue tyrosine 160. Residue threonine 188 coordinates FMN. Arginine 197 is an a 2-oxocarboxylate binding site. Lysine 277 serves as a coordination point for FMN. The Proton acceptor role is filled by histidine 301. An a 2-oxocarboxylate-binding site is contributed by arginine 304. Residues 332–336 (DSGVR) and 355–356 (GR) contribute to the FMN site.

This sequence belongs to the FMN-dependent alpha-hydroxy acid dehydrogenase family. It depends on FMN as a cofactor.

It is found in the cytoplasm. The protein resides in the nucleus. The protein is FMN-dependent alpha-hydroxy acid dehydrogenase PB1A11.03 of Schizosaccharomyces pombe (strain 972 / ATCC 24843) (Fission yeast).